The chain runs to 315 residues: Protein OPG185 (315 aa).

Residues 1–16 (MTRLPILLLLISLVYA) form the signal peptide. The 105-residue stretch at 17–121 (TPFPQTSKKI…NDTDKVDYEE (105 aa)) folds into the Ig-like V-type domain. Residues 17–279 (TPFPQTSKKI…SNYKTKDFVE (263 aa)) lie on the Virion surface side of the membrane. A disulfide bridge links cysteine 34 with cysteine 103. Asparagine 37, asparagine 69, asparagine 112, and asparagine 161 each carry an N-linked (GlcNAc...) asparagine; by host glycan. Polar residues predominate over residues 193 to 202 (NTVSASSGES). The segment at 193 to 213 (NTVSASSGESTTDETPEPITD) is disordered. The N-linked (GlcNAc...) asparagine; by host glycan is linked to asparagine 254. Residues 280 to 303 (IFGITALIILSAVAIFCITYYIYN) traverse the membrane as a helical segment. At 304–315 (KRSRKYKTENKV) the chain is on the intravirion side.

This sequence belongs to the orthopoxvirus OPG185 family. As to quaternary structure, heterodimerizes with OPG040. The heterodimer OPG185-OPG040 interacts with components of the entry fusion complex OPG143 and OPG094. Heterodimer with C3/VPC protein; disulfide-linked. In terms of processing, glycosylated; contains phosphate and sulfate-substituted glycans. O-glycosylation is required for hemagglutination and hemadsorption activities of infected cell membranes.

It is found in the virion membrane. The protein resides in the host membrane. Functionally, prevents cell to cell fusion by interacting with and directing the viral OPG040 protein on the host plasma membrane. The OPG185-OPG040 complex associates with components of the entry fusion complex (EFC) presumably to avoid superinfection and syncytium formation. Via its interaction with C3/VCP protein, protects the infected cell and probably also the extracellular enveloped virus from complement attack. The chain is Protein OPG185 (OPG185) from Homo sapiens (Human).